A 496-amino-acid chain; its full sequence is Geranylhydroquinone 3''-hydroxylase CYP76B74 (496 aa).

A helical membrane pass occupies residues 3–23; it reads YTTILVGFLIGFVLFKALTRK. C436 lines the heme pocket.

This sequence belongs to the cytochrome P450 family. Heme is required as a cofactor.

It is found in the endoplasmic reticulum membrane. It catalyses the reaction (2E)-geranylhydroquinone + reduced [NADPH--hemoprotein reductase] + O2 = (2Z)-3''-hydroxygeranylhydroquinone + oxidized [NADPH--hemoprotein reductase] + H2O + H(+). Functionally, hydroxylase involved in the biosynthesis pathway of the red naphthoquinone pigment shikonin. Catalyzes the key step C-3''-hydroxylation of the prenylated phenolic intermediate geranylhydroquinone to form 3''-hydroxygeranylhydroquinone. This Arnebia euchroma (Pink arnebia) protein is Geranylhydroquinone 3''-hydroxylase CYP76B74.